The sequence spans 196 residues: Large ribosomal subunit protein eL15 (196 aa).

The segment at Arg159–Lys196 is disordered. The span at Lys179–Lys196 shows a compositional bias: basic and acidic residues.

Belongs to the eukaryotic ribosomal protein eL15 family.

In Natronomonas pharaonis (strain ATCC 35678 / DSM 2160 / CIP 103997 / JCM 8858 / NBRC 14720 / NCIMB 2260 / Gabara) (Halobacterium pharaonis), this protein is Large ribosomal subunit protein eL15.